Here is a 208-residue protein sequence, read N- to C-terminus: Na(+)-translocating NADH-quinone reductase subunit D (208 aa).

5 consecutive transmembrane segments (helical) span residues 42 to 62 (IVMG…ISLV), 72 to 92 (IIVQ…LLQA), 103 to 123 (VFVG…AFAM), 131 to 151 (LIDG…VATV), and 178 to 198 (NGLF…IWGL).

The protein belongs to the NqrDE/RnfAE family. Composed of six subunits; NqrA, NqrB, NqrC, NqrD, NqrE and NqrF.

The protein localises to the cell inner membrane. The enzyme catalyses a ubiquinone + n Na(+)(in) + NADH + H(+) = a ubiquinol + n Na(+)(out) + NAD(+). In terms of biological role, NQR complex catalyzes the reduction of ubiquinone-1 to ubiquinol by two successive reactions, coupled with the transport of Na(+) ions from the cytoplasm to the periplasm. NqrA to NqrE are probably involved in the second step, the conversion of ubisemiquinone to ubiquinol. The protein is Na(+)-translocating NADH-quinone reductase subunit D of Neisseria meningitidis serogroup B (strain ATCC BAA-335 / MC58).